A 224-amino-acid chain; its full sequence is Adenylate kinase (224 aa).

Residue 10–15 coordinates ATP; sequence GSGKGT. The tract at residues 30 to 59 is NMP; it reads ESGAIFRDNIKGGTDLGMKAKAYIDKGDLV. AMP-binding positions include Ser31, Arg36, 57-59, 85-88, and Gln92; these read DLV and GFPR. The segment at 126-165 is LID; sequence GRRLCENDNNHPNNIFIDAIKPNGDKCRVCGGALSSRADD. ATP is bound at residue Arg127. The AMP site is built by Arg162 and Arg174. Asn211 is a binding site for ATP.

Belongs to the adenylate kinase family. Monomer.

Its subcellular location is the cytoplasm. The catalysed reaction is AMP + ATP = 2 ADP. The protein operates within purine metabolism; AMP biosynthesis via salvage pathway; AMP from ADP: step 1/1. Catalyzes the reversible transfer of the terminal phosphate group between ATP and AMP. Plays an important role in cellular energy homeostasis and in adenine nucleotide metabolism. The sequence is that of Adenylate kinase from Desulforapulum autotrophicum (strain ATCC 43914 / DSM 3382 / VKM B-1955 / HRM2) (Desulfobacterium autotrophicum).